Reading from the N-terminus, the 214-residue chain is Probable GTP-binding protein EngB (214 aa).

The 184-residue stretch at 31-214 (GPPEIAFAGR…LRAAILQTIA (184 aa)) folds into the EngB-type G domain. GTP contacts are provided by residues 39 to 46 (GRSNVGKS), 66 to 70 (GRTQE), 93 to 96 (DMPG), 160 to 163 (TKSD), and 194 to 196 (TSS). Mg(2+)-binding residues include S46 and T68.

The protein belongs to the TRAFAC class TrmE-Era-EngA-EngB-Septin-like GTPase superfamily. EngB GTPase family. Requires Mg(2+) as cofactor.

Its function is as follows. Necessary for normal cell division and for the maintenance of normal septation. The polypeptide is Probable GTP-binding protein EngB (Bartonella tribocorum (strain CIP 105476 / IBS 506)).